We begin with the raw amino-acid sequence, 119 residues long: Large ribosomal subunit protein bL20 (119 aa).

It belongs to the bacterial ribosomal protein bL20 family.

Functionally, binds directly to 23S ribosomal RNA and is necessary for the in vitro assembly process of the 50S ribosomal subunit. It is not involved in the protein synthesizing functions of that subunit. This chain is Large ribosomal subunit protein bL20, found in Verminephrobacter eiseniae (strain EF01-2).